We begin with the raw amino-acid sequence, 1166 residues long: Poly [ADP-ribose] polymerase tankyrase-2 (1166 aa).

3 ANK repeats span residues 57–89 (RKSTPLHFAAGFGRKDVVEYLLQNGANVQARDD), 90–122 (GGLIPLHNACSFGHAEVVNLLLRHGADPNARDN), and 123–155 (WNYTPLHEAAIKGKIDVCIVLLQHGAEPTIRNT). (3S)-3-hydroxyasparagine; by HIF1AN; partial is present on Asn203. ANK repeat units lie at residues 210–242 (RKSTPLHLAAGYNRVKIVQLLLQHGADVHAKDK), 243–275 (GDLVPLHNACSYGHYEVTELLVKHGACVNAMDL), 276–308 (WQFTPLHEAASKNRVEVCSLLLSYGADPTLLNC), 363–398 (THETALHCAAASPYPKRKQICELLLRKGANINEKTK), 399–431 (EFLTPLHVASEKAHNDVVEVVVKHEAKVNALDN), and 432–464 (LGQTSLHRAAYCGHLQTCRLLLSYGCDPNIISL). A (3S)-3-hydroxyhistidine; by HIF1AN; partial modification is found at His238. Asn271 is modified ((3S)-3-hydroxyasparagine; by HIF1AN; partial). (3S)-3-hydroxyasparagine; by HIF1AN; partial is present on Asn427. The residue at position 518 (Asn518) is a (3S)-3-hydroxyasparagine; by HIF1AN; partial. 3 ANK repeats span residues 525 to 557 (RQSTPLHFAAGYNRVSVVEYLLQHGADVHAKDK), 558 to 590 (GGLVPLHNACSYGHYEVAELLVKHGAVVNVADL), and 591 to 623 (WKFTPLHEAAAKGKYEICKLLLQHGADPTKKNR). The tract at residues 545 to 553 (LLQHGADVH) is HIF1AN-binding. His553 is modified ((3S)-3-hydroxyhistidine; by HIF1AN; partial). Asn586 is subject to (3S)-3-hydroxyasparagine; by HIF1AN; partial. Asn671, Asn706, and Asn739 each carry (3S)-3-hydroxyasparagine; by HIF1AN; partial. ANK repeat units follow at residues 678–710 (RHSTPLHLAAGYNNLEVAEYLLQHGADVNAQDK), 711–743 (GGLIPLHNAASYGHVDVAALLIKYNACVNATDK), and 744–776 (WAFTPLHEAAQKGRTQLCALLLAHGADPTLKNQ). Residues 819–839 (GATADALSSGPSSPSSLSAAS) form a disordered region. Positions 822–839 (ADALSSGPSSPSSLSAAS) are enriched in low complexity. Positions 873-936 (GVDFSITQFV…IKGVERLISG (64 aa)) constitute an SAM domain. The 206-residue stretch at 959–1164 (SPDDKEFQSV…YQIMRPEGMV (206 aa)) folds into the PARP catalytic domain. The Zn(2+) site is built by Cys1081, His1084, Cys1089, and Cys1092.

The protein belongs to the ARTD/PARP family. In terms of assembly, oligomerizes and associates with TNKS. Interacts with the cytoplasmic domain of LNPEP/Otase in SLC2A4/GLUT4-vesicles. Binds to the N-terminus of Grb14 and TRF1 with its ankyrin repeat region. Interacts with HIF1AN. Interacts with RNF146; this interaction leads to ubiquitination and proteasomal degradation. Interacts with NUMA1. In terms of processing, ubiquitinated at 'Lys-48' and 'Lys-63' by RNF146 when auto-poly-ADP-ribosylated; this leads to degradation. Deubiquitinated by USP25; leading to stabilization. Post-translationally, ADP-ribosylated (-auto). Poly-ADP-ribosylated protein is recognized by RNF146, followed by ubiquitination. The crystallographic evidence suggests that the 3-hydroxyhistidine may be the (3S) stereoisomer. As to expression, highly expressed in placenta, skeletal muscle, liver, brain, kidney, heart, thymus, spinal cord, lung, peripheral blood leukocytes, pancreas, lymph nodes, spleen, prostate, testis, ovary, small intestine, colon, mammary gland, breast and breast carcinoma, and in common-type meningioma. Highly expressed in fetal liver, heart and brain.

Its subcellular location is the cytoplasm. It is found in the golgi apparatus membrane. The protein resides in the nucleus. The protein localises to the chromosome. It localises to the telomere. It carries out the reaction NAD(+) + (ADP-D-ribosyl)n-acceptor = nicotinamide + (ADP-D-ribosyl)n+1-acceptor + H(+).. The catalysed reaction is L-aspartyl-[protein] + NAD(+) = 4-O-(ADP-D-ribosyl)-L-aspartyl-[protein] + nicotinamide. It catalyses the reaction L-glutamyl-[protein] + NAD(+) = 5-O-(ADP-D-ribosyl)-L-glutamyl-[protein] + nicotinamide. With respect to regulation, specifically inhibited by XAV939, a small molecule, leading to inhibit the Wnt signaling pathway by stabilizing AXIN1 and AXIN2. Inhibited by talazoparib. In terms of biological role, poly-ADP-ribosyltransferase involved in various processes such as Wnt signaling pathway, telomere length and vesicle trafficking. Acts as an activator of the Wnt signaling pathway by mediating poly-ADP-ribosylation of AXIN1 and AXIN2, 2 key components of the beta-catenin destruction complex: poly-ADP-ribosylated target proteins are recognized by RNF146, which mediates their ubiquitination and subsequent degradation. Also mediates poly-ADP-ribosylation of BLZF1 and CASC3, followed by recruitment of RNF146 and subsequent ubiquitination. Mediates poly-ADP-ribosylation of TERF1, thereby contributing to the regulation of telomere length. Stimulates 26S proteasome activity. This Homo sapiens (Human) protein is Poly [ADP-ribose] polymerase tankyrase-2.